The sequence spans 242 residues: Ribosomal RNA small subunit methyltransferase G (242 aa).

S-adenosyl-L-methionine-binding positions include Gly81, Phe86, 104–106 (DST), 132–133 (AE), and Arg151.

The protein belongs to the methyltransferase superfamily. RNA methyltransferase RsmG family.

The protein localises to the cytoplasm. Its function is as follows. Specifically methylates the N7 position of a guanine in 16S rRNA. The sequence is that of Ribosomal RNA small subunit methyltransferase G from Synechococcus elongatus (strain ATCC 33912 / PCC 7942 / FACHB-805) (Anacystis nidulans R2).